The primary structure comprises 959 residues: General transcription factor II-I repeat domain-containing protein 1 (959 aa).

Glycyl lysine isopeptide (Lys-Gly) (interchain with G-Cter in SUMO2) cross-links involve residues K27 and K94. The segment covering 96 to 106 has biased composition (basic and acidic residues); that stretch reads PEAEHPKKVQR. A disordered region spans residues 96–117; it reads PEAEHPKKVQRGEGGGRSLPRS. Residues 119–213 form a GTF2I-like 1 repeat; it reads LEHGSDVYLL…LEDGGRDSKA (95 aa). Residues K184, K212, K225, K238, K271, K294, K308, K337, K436, K439, and K443 each participate in a glycyl lysine isopeptide (Lys-Gly) (interchain with G-Cter in SUMO2) cross-link. Positions 230–250 are disordered; the sequence is CGLHGQAPKVPPQDLPPTATS. A GTF2I-like 2 repeat occupies 342–436; that stretch reads IKETEDINTL…FDERIFTGNK (95 aa). The residue at position 448 (S448) is a Phosphoserine. The tract at residues 468-492 is disordered; that stretch reads NARSDKGSMSEDCGPGTSGELGGLR. Residues 556–650 form a GTF2I-like 3 repeat; sequence DSHGDVIRPL…ELLTEGVKEP (95 aa). Glycyl lysine isopeptide (Lys-Gly) (interchain with G-Cter in SUMO2) cross-links involve residues K567, K579, K588, K622, K638, and K648. Residue S654 is modified to Phosphoserine. The interval 654–679 is disordered; that stretch reads SQGTASSLGFSPPALPPERDSGDPLV. Residues P669, P670, D680, and K684 each participate in a glycyl lysine isopeptide (Lys-Gly) (interchain with G-Cter in SUMO2) cross-link. Q686 is subject to Phosphoserine. 2 GTF2I-like repeats span residues 696-790 and 793-887; these read LSRI…KPDE and ANRL…ICND. Residues I701, K724, K732, K772, K774, K787, K829, K889, and K893 each participate in a glycyl lysine isopeptide (Lys-Gly) (interchain with G-Cter in SUMO2) cross-link. A disordered region spans residues 892–927; the sequence is AKDSSIPKRKRKRVSEGNSVSSSSSSSSSSSSNPDS. The Nuclear localization signal signature appears at 898–905; it reads PKRKRKRV. The segment covering 910-923 has biased composition (low complexity); the sequence is SVSSSSSSSSSSSS.

It belongs to the TFII-I family. Interacts with the retinoblastoma protein (RB1) via its C-terminus. As to expression, highly expressed in adult skeletal muscle, heart, fibroblast, bone and fetal tissues. Expressed at lower levels in all other tissues tested.

The protein resides in the nucleus. May be a transcription regulator involved in cell-cycle progression and skeletal muscle differentiation. May repress GTF2I transcriptional functions, by preventing its nuclear residency, or by inhibiting its transcriptional activation. May contribute to slow-twitch fiber type specificity during myogenesis and in regenerating muscles. Binds troponin I slow-muscle fiber enhancer (USE B1). Binds specifically and with high affinity to the EFG sequences derived from the early enhancer of HOXC8. This chain is General transcription factor II-I repeat domain-containing protein 1 (GTF2IRD1), found in Homo sapiens (Human).